Reading from the N-terminus, the 390-residue chain is NADH-quinone oxidoreductase subunit D (390 aa).

This sequence belongs to the complex I 49 kDa subunit family. NDH-1 is composed of 14 different subunits. Subunits NuoB, C, D, E, F, and G constitute the peripheral sector of the complex.

The protein resides in the cell inner membrane. The catalysed reaction is a quinone + NADH + 5 H(+)(in) = a quinol + NAD(+) + 4 H(+)(out). Its function is as follows. NDH-1 shuttles electrons from NADH, via FMN and iron-sulfur (Fe-S) centers, to quinones in the respiratory chain. The immediate electron acceptor for the enzyme in this species is believed to be ubiquinone. Couples the redox reaction to proton translocation (for every two electrons transferred, four hydrogen ions are translocated across the cytoplasmic membrane), and thus conserves the redox energy in a proton gradient. This Geobacter metallireducens (strain ATCC 53774 / DSM 7210 / GS-15) protein is NADH-quinone oxidoreductase subunit D.